The following is a 482-amino-acid chain: ATP synthase subunit beta (482 aa).

162-169 (GGAGVGKT) is an ATP binding site.

Belongs to the ATPase alpha/beta chains family. In terms of assembly, F-type ATPases have 2 components, CF(1) - the catalytic core - and CF(0) - the membrane proton channel. CF(1) has five subunits: alpha(3), beta(3), gamma(1), delta(1), epsilon(1). CF(0) has four main subunits: a(1), b(1), b'(1) and c(9-12).

Its subcellular location is the cellular thylakoid membrane. It carries out the reaction ATP + H2O + 4 H(+)(in) = ADP + phosphate + 5 H(+)(out). Its function is as follows. Produces ATP from ADP in the presence of a proton gradient across the membrane. The catalytic sites are hosted primarily by the beta subunits. This is ATP synthase subunit beta from Nostoc sp. (strain PCC 7120 / SAG 25.82 / UTEX 2576).